The following is a 214-amino-acid chain: DNA-directed RNA polymerase subunit alpha (214 aa).

Belongs to the RNA polymerase alpha chain family. In plastids the minimal PEP RNA polymerase catalytic core is composed of four subunits: alpha, beta, beta', and beta''. When a (nuclear-encoded) sigma factor is associated with the core the holoenzyme is formed, which can initiate transcription.

Its subcellular location is the plastid. The protein resides in the chloroplast. The catalysed reaction is RNA(n) + a ribonucleoside 5'-triphosphate = RNA(n+1) + diphosphate. Its function is as follows. DNA-dependent RNA polymerase catalyzes the transcription of DNA into RNA using the four ribonucleoside triphosphates as substrates. The chain is DNA-directed RNA polymerase subunit alpha (rpoA) from Euglena viridis (Cercaria viridis).